Reading from the N-terminus, the 179-residue chain is Large ribosomal subunit protein uL6 (179 aa).

The protein belongs to the universal ribosomal protein uL6 family. In terms of assembly, part of the 50S ribosomal subunit.

Its function is as follows. This protein binds to the 23S rRNA, and is important in its secondary structure. It is located near the subunit interface in the base of the L7/L12 stalk, and near the tRNA binding site of the peptidyltransferase center. This Geotalea uraniireducens (strain Rf4) (Geobacter uraniireducens) protein is Large ribosomal subunit protein uL6.